Here is a 1018-residue protein sequence, read N- to C-terminus: Thrombospondin type-1 domain-containing protein 4 (1018 aa).

The N-terminal stretch at 1–25 (MVSHFMGSLSVLCFLLLLGFQFVCP) is a signal peptide. In terms of domain architecture, TSP type-1 1 spans 53 to 307 (PGVWGAWGPW…YKLCNTNVCP (255 aa)). Disordered stretches follow at residues 111–235 (SVPL…RSGL), 254–279 (PAAS…ATQS), and 534–623 (SPQV…NWKQ). Residues 187–200 (QRLRRQKLSSRHSR) are compositionally biased toward basic residues. Residues 201–210 (SQGASSARHG) are compositionally biased toward low complexity. The span at 259–279 (LFHSPETSNNHGVGTHGATQS) shows a compositional bias: polar residues. Composition is skewed to basic and acidic residues over residues 556–577 (RSQE…RGEA) and 592–603 (RHPDRFSPHRPD). TSP type-1 domains are found at residues 676–737 (CPAF…KICS), 739–792 (WQIR…DMGP), 793–851 (CAKS…GPCT), 852–911 (GKVE…HLKP), and 912–968 (CGAK…QDCV). Residues 971-1008 (VDENCKDKYYNCNVVVQARLCVYNYYKTACCASCTRVA) form the PLAC domain.

Interacts with FBN1. May interact with TGFB1.

The protein localises to the secreted. The protein resides in the extracellular space. It localises to the extracellular matrix. Promotes FBN1 matrix assembly. Attenuates TGFB signaling, possibly by accelerating the sequestration of large latent complexes of TGFB or active TGFB by FBN1 microfibril assembly, thereby negatively regulating the expression of TGFB regulatory targets, such as POSTN. In Homo sapiens (Human), this protein is Thrombospondin type-1 domain-containing protein 4 (THSD4).